The following is an 810-amino-acid chain: LPS-assembly protein LptD (810 aa).

The signal sequence occupies residues 1 to 29 (MTKRTLGYSYPIALTISLVPALTPAIVQA).

It belongs to the LptD family. In terms of assembly, component of the lipopolysaccharide transport and assembly complex. Interacts with LptE and LptA.

It localises to the cell outer membrane. Functionally, together with LptE, is involved in the assembly of lipopolysaccharide (LPS) at the surface of the outer membrane. This is LPS-assembly protein LptD from Aeromonas hydrophila subsp. hydrophila (strain ATCC 7966 / DSM 30187 / BCRC 13018 / CCUG 14551 / JCM 1027 / KCTC 2358 / NCIMB 9240 / NCTC 8049).